Consider the following 429-residue polypeptide: Protein S-Myc (429 aa).

At Tyr-36 the chain carries Phosphotyrosine; by Tyr-kinases. Residues 301–325 (PLPYAEDARPLKKPRSQDPLGPLKC) form a disordered region. Positions 346 to 398 (ERRRNHNRMERQRRDIMRSSFLNLRDLVPELVHNEKAAKVVILKKATEYIHTL) constitute a bHLH domain. The tract at residues 398–419 (LQTDESKLLVEREKLYERKQQL) is leucine-zipper.

In terms of assembly, efficient DNA binding requires dimerization with another bHLH protein.

It localises to the nucleus. Its function is as follows. Has apoptosis-inducing activity. The chain is Protein S-Myc (Mycs) from Rattus norvegicus (Rat).